The chain runs to 190 residues: Glutathione peroxidase 2 (190 aa).

Sec-40 is an active-site residue. A non-standard amino acid (selenocysteine) is located at residue Sec-40.

It belongs to the glutathione peroxidase family. As to quaternary structure, homotetramer.

The protein resides in the cytoplasm. The protein localises to the cytosol. It catalyses the reaction 2 glutathione + H2O2 = glutathione disulfide + 2 H2O. The catalysed reaction is a hydroperoxy polyunsaturated fatty acid + 2 glutathione = a hydroxy polyunsaturated fatty acid + glutathione disulfide + H2O. It carries out the reaction tert-butyl hydroperoxide + 2 glutathione = tert-butanol + glutathione disulfide + H2O. The enzyme catalyses cumene hydroperoxide + 2 glutathione = 2-phenylpropan-2-ol + glutathione disulfide + H2O. It catalyses the reaction (13S)-hydroperoxy-(9Z,11E)-octadecadienoate + 2 glutathione = (13S)-hydroxy-(9Z,11E)-octadecadienoate + glutathione disulfide + H2O. The catalysed reaction is (5S)-hydroperoxy-(6E,8Z,11Z,14Z)-eicosatetraenoate + 2 glutathione = (5S)-hydroxy-(6E,8Z,11Z,14Z)-eicosatetraenoate + glutathione disulfide + H2O. It carries out the reaction (12R)-hydroperoxy-(5Z,8Z,10E,14Z)-eicosatetraenoate + 2 glutathione = (12R)-hydroxy-(5Z,8Z,10E,14Z)-eicosatetraenoate + glutathione disulfide + H2O. The enzyme catalyses (15S)-hydroperoxy-(5Z,8Z,11Z,13E)-eicosatetraenoate + 2 glutathione = (15S)-hydroxy-(5Z,8Z,11Z,13E)-eicosatetraenoate + glutathione disulfide + H2O. Functionally, catalyzes the reduction of hydroperoxides in a glutathione-dependent manner thus regulating cellular redox homeostasis. Can reduce small soluble hydroperoxides such as H2O2, cumene hydroperoxide and tert-butyl hydroperoxide, as well as several fatty acid-derived hydroperoxides. Cannot reduce phosphatidycholine hydroperoxide. The sequence is that of Glutathione peroxidase 2 (GPX2) from Pongo pygmaeus (Bornean orangutan).